Reading from the N-terminus, the 828-residue chain is Periplasmic nitrate reductase (828 aa).

A signal peptide (tat-type signal) is located at residues 1–31; it reads MKLSRRSFMKANAVAAAAAAAGLSVPGVARA. The 4Fe-4S Mo/W bis-MGD-type domain maps to 39–95; that stretch reads IKWDKAPCRFCGTGCGVLVGTQQGRVVACQGDPDAPVNRGLNCIKGYFLPKIMYGKD. Cys46, Cys49, Cys53, and Cys81 together coordinate [4Fe-4S] cluster. Residues Lys83, Gln150, Asn175, Cys179, 212–219, 243–247, 262–264, Met372, Gln376, Asn482, 508–509, Lys531, Asp558, and 718–727 each bind Mo-bis(molybdopterin guanine dinucleotide); these read WGANMAEM, STYQH, QSD, SD, and TGRVLEHWHT. Phe794 is a binding site for substrate. Residues Asn802 and Lys819 each contribute to the Mo-bis(molybdopterin guanine dinucleotide) site.

The protein belongs to the prokaryotic molybdopterin-containing oxidoreductase family. NasA/NapA/NarB subfamily. Component of the periplasmic nitrate reductase NapAB complex composed of NapA and NapB. Requires [4Fe-4S] cluster as cofactor. Mo-bis(molybdopterin guanine dinucleotide) is required as a cofactor. Post-translationally, predicted to be exported by the Tat system. The position of the signal peptide cleavage has not been experimentally proven.

It localises to the periplasm. The enzyme catalyses 2 Fe(II)-[cytochrome] + nitrate + 2 H(+) = 2 Fe(III)-[cytochrome] + nitrite + H2O. In terms of biological role, catalytic subunit of the periplasmic nitrate reductase complex NapAB. Receives electrons from NapB and catalyzes the reduction of nitrate to nitrite. This chain is Periplasmic nitrate reductase, found in Shigella flexneri serotype 5b (strain 8401).